Consider the following 138-residue polypeptide: Large ribosomal subunit protein bL19 (138 aa).

The protein belongs to the bacterial ribosomal protein bL19 family.

This protein is located at the 30S-50S ribosomal subunit interface and may play a role in the structure and function of the aminoacyl-tRNA binding site. This is Large ribosomal subunit protein bL19 from Rickettsia conorii (strain ATCC VR-613 / Malish 7).